The sequence spans 261 residues: Imidazole glycerol phosphate synthase subunit HisF (261 aa).

Catalysis depends on residues aspartate 16 and aspartate 135.

It belongs to the HisA/HisF family. In terms of assembly, heterodimer of HisH and HisF.

Its subcellular location is the cytoplasm. It catalyses the reaction 5-[(5-phospho-1-deoxy-D-ribulos-1-ylimino)methylamino]-1-(5-phospho-beta-D-ribosyl)imidazole-4-carboxamide + L-glutamine = D-erythro-1-(imidazol-4-yl)glycerol 3-phosphate + 5-amino-1-(5-phospho-beta-D-ribosyl)imidazole-4-carboxamide + L-glutamate + H(+). Its pathway is amino-acid biosynthesis; L-histidine biosynthesis; L-histidine from 5-phospho-alpha-D-ribose 1-diphosphate: step 5/9. Functionally, IGPS catalyzes the conversion of PRFAR and glutamine to IGP, AICAR and glutamate. The HisF subunit catalyzes the cyclization activity that produces IGP and AICAR from PRFAR using the ammonia provided by the HisH subunit. The chain is Imidazole glycerol phosphate synthase subunit HisF from Mycolicibacterium smegmatis (strain ATCC 700084 / mc(2)155) (Mycobacterium smegmatis).